The following is a 416-amino-acid chain: Enterobactin exporter EntS (416 aa).

Topologically, residues 1 to 21 (MNKQSWLLNLSLLKTHPAFRA) are cytoplasmic. The chain crosses the membrane as a helical span at residues 22–42 (VFLARFISIVSLGLLGVAVPV). Over 43 to 55 (QIQMMTHSTWQVG) the chain is Periplasmic. The helical transmembrane segment at 56 to 76 (LSVTLTGGAMFVGLMVGGVLA) threads the bilayer. The Cytoplasmic segment spans residues 77–83 (DRYERKK). A helical transmembrane segment spans residues 84–104 (VILLARGTCGIGFIGLCLNAL). The Periplasmic segment spans residues 105–109 (LPEPS). The helical transmembrane segment at 110-130 (LLAIYLLGLWDGFFASLGVTA) threads the bilayer. Residues 131–156 (LLAATPALVGRENLMQAGAITMLTVR) lie on the Cytoplasmic side of the membrane. Residues 157–177 (LGSVISPMIGGLLLATGGVAW) form a helical membrane-spanning segment. Asn-178 is a topological domain (periplasmic). The helical transmembrane segment at 179–199 (YGLAAAGTFITLLPLLSLPAL) threads the bilayer. Over 200 to 218 (PPPPQPREHPLKSLLAGFR) the chain is Cytoplasmic. The chain crosses the membrane as a helical span at residues 219-239 (FLLASPLVGGIALLGGLLTMA). Residues 240 to 256 (SAVRVLYPALADNWQMS) lie on the Periplasmic side of the membrane. Residues 257–277 (AAQIGFLYAAIPLGAAIGALT) traverse the membrane as a helical segment. Over 278-287 (SGKLAHSARP) the chain is Cytoplasmic. Residues 288–307 (GLLMLLSTLGSFLAIGLFGL) traverse the membrane as a helical segment. Residues 308–313 (MPMWIL) lie on the Periplasmic side of the membrane. Residues 314-336 (GVVCLALFGWLSAVSSLLQYTML) traverse the membrane as a helical segment. The Cytoplasmic segment spans residues 337–356 (QTQTPEAMLGRINGLWTAQN). The helical transmembrane segment at 357-377 (VTGDAIGAALLGGLGAMMTPV) threads the bilayer. Residue Ala-378 is a topological domain, periplasmic. The helical transmembrane segment at 379 to 399 (SASASGFGLLIIGVLLLLVLV) threads the bilayer. At 400-416 (ELRHFRQTPPQVTASDS) the chain is on the cytoplasmic side.

Belongs to the major facilitator superfamily. EntS (TC 2.A.1.38) family.

Its subcellular location is the cell inner membrane. In terms of biological role, component of an export pathway for enterobactin. The polypeptide is Enterobactin exporter EntS (Escherichia coli (strain K12 / MC4100 / BW2952)).